A 346-amino-acid chain; its full sequence is Uricase (346 aa).

The disordered stretch occupies residues 1–23 (MFATPLRQPTNASGARPAVSMDG). Residues Lys-39 and Thr-84 each act as charge relay system in the active site. The urate site is built by Thr-84, Asp-85, Phe-208, Arg-225, Val-273, Gln-274, and Asn-300. His-302 (charge relay system) is an active-site residue. A Microbody targeting signal motif is present at residues 344 to 346 (SHL).

The protein belongs to the uricase family. Malpighian tubules.

Its subcellular location is the peroxisome. The catalysed reaction is urate + O2 + H2O = 5-hydroxyisourate + H2O2. Its pathway is purine metabolism; urate degradation; (S)-allantoin from urate: step 1/3. With respect to regulation, repressed by 20-hydroxyecdysone. Catalyzes the oxidation of uric acid to 5-hydroxyisourate, which is further processed to form (S)-allantoin. In Drosophila pseudoobscura pseudoobscura (Fruit fly), this protein is Uricase (Uro).